Reading from the N-terminus, the 214-residue chain is Probable GTP-binding protein EngB (214 aa).

Residues 24 to 199 enclose the EngB-type G domain; the sequence is GGYEVAFAGR…RGIVGGWLGL (176 aa). Residues 32 to 39, 59 to 63, 77 to 80, 144 to 147, and 178 to 180 contribute to the GTP site; these read GRSNAGKS, GRTQQ, DLPG, TKAD, and YSG. Mg(2+) contacts are provided by serine 39 and threonine 61.

It belongs to the TRAFAC class TrmE-Era-EngA-EngB-Septin-like GTPase superfamily. EngB GTPase family. It depends on Mg(2+) as a cofactor.

In terms of biological role, necessary for normal cell division and for the maintenance of normal septation. This chain is Probable GTP-binding protein EngB, found in Xanthomonas axonopodis pv. citri (strain 306).